Reading from the N-terminus, the 680-residue chain is Anosmin-1 (680 aa).

Residues 1–24 (MVPGVPGAVLTLCLWLAASSGCLA) form the signal peptide. Cystine bridges form between Cys-49–Cys-83, Cys-53–Cys-77, Cys-86–Cys-105, Cys-90–Cys-101, and Cys-116–Cys-120. An N-linked (GlcNAc...) asparagine glycan is attached at Asn-71. The region spanning 127 to 176 (LLVKQGDCPAPEKASGFAAACVESCEVDNECSGVKKCCSNGCGHTCQVPK) is the WAP domain. 4 consecutive Fibronectin type-III domains span residues 186–287 (PRKE…SKDP), 292–400 (APAN…THAT), 425–523 (PTRP…TPPC), and 550–658 (KPEN…LPPS). Asn-209, Asn-300, Asn-470, Asn-553, and Asn-564 each carry an N-linked (GlcNAc...) asparagine glycan. Residues 642–680 (EGPATIKTFRTPELPPSSAHRSHLKHRHPHHYKPSPERY) are disordered. Over residues 661-674 (HRSHLKHRHPHHYK) the composition is skewed to basic residues.

As to quaternary structure, interacts with FGFR1; this interaction does not interfere with FGF2-binding to FGFR1. Binds heparin. Heparin may promote or interfere with ANOS1-FGFR1-FGF2 complex formation depending on the sequential order of its binding to the various constituents. For instance, heparin-ANOS1 interaction favors subsequent binding to pre-existing binary FGFR1-FGF2 complex, while heparin-FGF2 complex does not interact with ANOS1-FGFR1. Post-translationally, N-glycosylated. May be proteolytically cleaved at the cell surface and released from the cell surface. Expressed in the cerebellum (at protein level).

Its subcellular location is the cell membrane. It localises to the secreted. Has a dual branch-promoting and guidance activity, which may play an important role in the patterning of mitral and tufted cell collaterals to the olfactory cortex. Chemoattractant for fetal olfactory epithelial cells. This is Anosmin-1 from Homo sapiens (Human).